A 345-amino-acid polypeptide reads, in one-letter code: Putative membrane protein ORF59 (345 aa).

Helical transmembrane passes span 46-63 (LVFA…MMLI), 101-118 (IVFV…LVFL), 147-165 (IFGI…FSIL), and 265-286 (VVPV…WMVI).

Its subcellular location is the membrane. The polypeptide is Putative membrane protein ORF59 (ORF59) (Ictalurid herpesvirus 1 (strain Auburn) (IcHV-1)).